Here is a 152-residue protein sequence, read N- to C-terminus: Spermine/spermidine N(1)-acetyltransferase (152 aa).

Residues 3-152 (INIKAVTDDN…NGEKVMVKEL (150 aa)) form the N-acetyltransferase domain. Acetyl-CoA is bound by residues 82–84 (FFI), 89–95 (QGKGLGK), and 122–131 (NIHAIRLYQR). Tyr-129 functions as the Proton donor in the catalytic mechanism.

This sequence belongs to the acetyltransferase family.

The catalysed reaction is an alkane-alpha,omega-diamine + acetyl-CoA = an N-acetylalkane-alpha,omega-diamine + CoA + H(+). The enzyme catalyses spermine + acetyl-CoA = N(1)-acetylspermine + CoA + H(+). It carries out the reaction spermidine + acetyl-CoA = N(1)-acetylspermidine + CoA + H(+). Its pathway is amine and polyamine degradation; spermine degradation. It participates in amine and polyamine degradation; spermidine degradation. Its activity is regulated as follows. Putrescine and N(8)-acetylspermidine are competitive inhibitors of spermidine acetylation. Its function is as follows. Acetylates both spermidine and spermine at primary propyl amine moieties, with spermine being the preferred substrate. This Bacillus subtilis (strain 168) protein is Spermine/spermidine N(1)-acetyltransferase (bltD).